The primary structure comprises 477 residues: Cysteine--tRNA ligase (477 aa).

A Zn(2+)-binding site is contributed by Cys-29. The 'HIGH' region signature appears at 31–41; that stretch reads PTVYDFAHIGN. 3 residues coordinate Zn(2+): Cys-224, His-249, and Glu-253. The short motif at 282–286 is the 'KMSKS' region element; that stretch reads KMSKS. Residue Lys-285 participates in ATP binding.

Belongs to the class-I aminoacyl-tRNA synthetase family. Monomer. The cofactor is Zn(2+).

The protein localises to the cytoplasm. The catalysed reaction is tRNA(Cys) + L-cysteine + ATP = L-cysteinyl-tRNA(Cys) + AMP + diphosphate. In Nitrobacter winogradskyi (strain ATCC 25391 / DSM 10237 / CIP 104748 / NCIMB 11846 / Nb-255), this protein is Cysteine--tRNA ligase.